We begin with the raw amino-acid sequence, 500 residues long: Transcription termination factor MTERF8, chloroplastic (500 aa).

Residues 1–64 constitute a chloroplast transit peptide; sequence MVILSLVSCS…NHREPALTFR (64 aa).

Belongs to the mTERF family.

It is found in the plastid. The protein resides in the chloroplast. Its function is as follows. Transcription termination factor that is transcriptionally active in chloroplasts. The protein is Transcription termination factor MTERF8, chloroplastic of Arabidopsis thaliana (Mouse-ear cress).